The sequence spans 1588 residues: Paternally-expressed gene 3 protein (1588 aa).

In terms of domain architecture, SCAN box spans 46–128; the sequence is HQRFRNLIYV…TLLENYKEMY (83 aa). Disordered regions lie at residues 128–230, 266–306, and 319–349; these read YQPE…ESYQ, DGHS…RRGI, and KFIK…MSDD. Over residues 129 to 142 the composition is skewed to acidic residues; the sequence is QPEDDNNSDVTSDD. Composition is skewed to basic and acidic residues over residues 143–152, 161–182, 206–225, and 295–306; these read DMTRNRRESS, SGDR…DRWS, FEMD…RSQD, and PEAKKSTHRRGI. 3 C2H2-type zinc fingers span residues 454–476, 507–529, and 565–587; these read YVCD…QIMH, FECK…RKIH, and YECR…QKIH. Residues 588-607 show a composition bias toward basic and acidic residues; sequence FGDDKDNEREHERERERGET. The segment at 588–610 is disordered; that stretch reads FGDDKDNEREHERERERGETFRP. The C2H2-type 4 zinc finger occupies 627–649; the sequence is YECKVCGETFLHSSSLKEHQKIH. The tract at residues 838–930 is disordered; the sequence is LVASKPPRSH…EFSVPSSNVR (93 aa). A compositionally biased stretch (basic and acidic residues) spans 868-881; that stretch reads LNDKRQKIPARENP. Residues 969 to 991 form a C2H2-type 5 zinc finger; the sequence is YECQECGECFAHSSDLTEHQKIH. Residues 1056-1104 are disordered; sequence EKSHGEESQGENTDGEETHSEETHGQETIEDPVIQGSDMEDPQKDDPDD. Basic and acidic residues predominate over residues 1071–1082; the sequence is EETHSEETHGQE. 5 consecutive C2H2-type zinc fingers follow at residues 1107-1129, 1163-1185, 1225-1247, 1282-1304, and 1332-1354; these read YECE…QKVH, YECP…QRIH, IRCL…MRLH, FECA…VTVH, and YECK…KELH. Positions 1393–1495 are disordered; sequence EAAEPEVEAX…GIEDPEEGED (103 aa). The segment covering 1395 to 1415 has biased composition (acidic residues); sequence AEPEVEAXEPEVEAAEPEVEA. A run of 7 repeats spans residues 1397–1403, 1404–1410, 1411–1417, 1418–1422, 1425–1429, 1432–1436, and 1439–1443. The segment at 1397-1417 is 3 X 7 AA repeat of P-E-V-E-A-A-E; sequence PEVEAXEPEVEAAEPEVEAAE. Residues 1418–1443 form a 4 X 5 AA repeat of P-X-G-E-A region; sequence PNGEAEGPDGEAAEPIGEAGQPNGEA. 2 stretches are compositionally biased toward acidic residues: residues 1449 to 1466 and 1475 to 1495; these read DADE…ERAE and PEGD…EGED. 2 C2H2-type zinc fingers span residues 1505 to 1527 and 1564 to 1586; these read YDCH…LKTH and FKCD…QNTH.

The protein belongs to the krueppel C2H2-type zinc-finger protein family. Homodimer. Interacts with SIAH1A and SIAH2. Interacts with TRAF2.

Its subcellular location is the nucleus. It is found in the cytoplasm. In terms of biological role, induces apoptosis in cooperation with SIAH1A. Acts as a mediator between p53/TP53 and BAX in a neuronal death pathway that is activated by DNA damage. Acts synergistically with TRAF2 and inhibits TNF induced apoptosis through activation of NF-kappa-B. This chain is Paternally-expressed gene 3 protein (PEG3), found in Pan paniscus (Pygmy chimpanzee).